Reading from the N-terminus, the 683-residue chain is Glucosylceramidase (683 aa).

E254 serves as the catalytic Proton donor. The active-site Nucleophile is E483.

Belongs to the glycosyl hydrolase 5 (cellulase A) family.

The protein localises to the membrane. The enzyme catalyses a beta-D-glucosyl-(1&lt;-&gt;1')-N-acylsphing-4-enine + H2O = an N-acylsphing-4-enine + D-glucose. Inhibited by metal cations Co(2+), Cu(2+), Ni(2+), Pb(2+) and Zn(2+). Not inhibited by metal chelator ethylenediaminetetraacetic acid (EDTA). Its function is as follows. Specifically hydrolyzes the glucosidic linkage in glucosylceramide. May prevent accumulation of aberrent glucosylceramide containing immature ceramide. This Rhizopus delemar (strain RA 99-880 / ATCC MYA-4621 / FGSC 9543 / NRRL 43880) (Mucormycosis agent) protein is Glucosylceramidase.